The primary structure comprises 66 residues: Large ribosomal subunit protein uL29 (66 aa).

The protein belongs to the universal ribosomal protein uL29 family.

The protein is Large ribosomal subunit protein uL29 of Borrelia turicatae (strain 91E135).